We begin with the raw amino-acid sequence, 377 residues long: N-acetyldiaminopimelate deacetylase (377 aa).

Asp-69 is a catalytic residue. Glu-128 serves as the catalytic Proton acceptor.

The protein belongs to the peptidase M20A family. N-acetyldiaminopimelate deacetylase subfamily.

It carries out the reaction N-acetyl-(2S,6S)-2,6-diaminopimelate + H2O = (2S,6S)-2,6-diaminopimelate + acetate. It participates in amino-acid biosynthesis; L-lysine biosynthesis via DAP pathway; LL-2,6-diaminopimelate from (S)-tetrahydrodipicolinate (acetylase route): step 3/3. Functionally, catalyzes the conversion of N-acetyl-diaminopimelate to diaminopimelate and acetate. In Streptococcus sanguinis (strain SK36), this protein is N-acetyldiaminopimelate deacetylase.